The sequence spans 186 residues: MGRYTLALLPLIVFGGIAHGAKMLYDQDFHGKNIAEIPSALSHQGADAEPAAARRATLPALTDAAIKGKLTLVNVFASWCLPCRDEHPVLKELAKDGRLNIVAINYKDQSDNALRFLGELGNPYQAIGIDPNGKAAIDWGVYGIPESYLVGADGTILYKRVGPSTNISLKEGLVPAMEKALGKPVS.

An N-terminal signal peptide occupies residues 1-20 (MGRYTLALLPLIVFGGIAHG). The 136-residue stretch at 47-182 (DAEPAAARRA…LVPAMEKALG (136 aa)) folds into the Thioredoxin domain. A disulfide bond links Cys80 and Cys83.

Belongs to the thioredoxin family. DsbE subfamily.

It is found in the periplasm. Functionally, required for disulfide bond formation in some periplasmic proteins. Also acts as a disulfide oxidoreductase in cytochromes c biogenesis. The cysteines of apocytochromes c must be in the reduced state for covalent linkage between the two moieties to occur. This Rhizobium leguminosarum bv. viciae protein is Thiol:disulfide interchange protein CycY (cycY).